Here is a 217-residue protein sequence, read N- to C-terminus: Cytidylate kinase (217 aa).

9–17 (GPAASGKSS) contacts ATP.

It belongs to the cytidylate kinase family. Type 1 subfamily.

The protein localises to the cytoplasm. The enzyme catalyses CMP + ATP = CDP + ADP. It carries out the reaction dCMP + ATP = dCDP + ADP. The chain is Cytidylate kinase from Bdellovibrio bacteriovorus (strain ATCC 15356 / DSM 50701 / NCIMB 9529 / HD100).